The primary structure comprises 565 residues: O-fucosyltransferase 7 (565 aa).

A helical; Signal-anchor for type II membrane protein transmembrane segment spans residues 17–37; the sequence is VLIWAICVMTLLCFLTVHIYV. N-linked (GlcNAc...) asparagine glycans are attached at residues Asn-62, Asn-73, Asn-104, Asn-124, and Asn-190. Residue 327 to 329 participates in substrate binding; it reads HLR. An N-linked (GlcNAc...) asparagine glycan is attached at Asn-441. The disordered stretch occupies residues 515–565; it reads NEIHKTRQGSPRRRKGPASGTKGLERHRSEESFYENPLPDCLCQRDPSKAR. Basic residues predominate over residues 520 to 530; the sequence is TRQGSPRRRKG.

It belongs to the glycosyltransferase GT106 family.

The protein localises to the membrane. It participates in glycan metabolism. In Arabidopsis thaliana (Mouse-ear cress), this protein is O-fucosyltransferase 7.